The chain runs to 282 residues: Putative hydrolase Bmul_3283/BMULJ_05242 (282 aa).

Residues Glu124, Glu126, and Asp155 each contribute to the Mg(2+) site.

The protein belongs to the FAH family. Mg(2+) serves as cofactor.

This Burkholderia multivorans (strain ATCC 17616 / 249) protein is Putative hydrolase Bmul_3283/BMULJ_05242.